We begin with the raw amino-acid sequence, 103 residues long: Small ribosomal subunit protein eS25 (103 aa).

The segment at 1 to 23 (MGGEDMAKKKAPSAKEGEKQQGF) is disordered.

This sequence belongs to the eukaryotic ribosomal protein eS25 family.

The protein is Small ribosomal subunit protein eS25 (rps25e) of Aeropyrum pernix (strain ATCC 700893 / DSM 11879 / JCM 9820 / NBRC 100138 / K1).